The primary structure comprises 664 residues: DNA ligase (664 aa).

Residues 31-35 (DSTYD), 80-81 (SL), and Glu-110 contribute to the NAD(+) site. Catalysis depends on Lys-112, which acts as the N6-AMP-lysine intermediate. NAD(+) contacts are provided by Arg-133, Glu-167, Lys-282, and Lys-306. Residues Cys-400, Cys-403, Cys-418, and Cys-423 each coordinate Zn(2+). Positions 583–664 (QSNAPLAGKT…LLEELAKYEG (82 aa)) constitute a BRCT domain.

Belongs to the NAD-dependent DNA ligase family. LigA subfamily. Mg(2+) serves as cofactor. It depends on Mn(2+) as a cofactor.

The catalysed reaction is NAD(+) + (deoxyribonucleotide)n-3'-hydroxyl + 5'-phospho-(deoxyribonucleotide)m = (deoxyribonucleotide)n+m + AMP + beta-nicotinamide D-nucleotide.. Functionally, DNA ligase that catalyzes the formation of phosphodiester linkages between 5'-phosphoryl and 3'-hydroxyl groups in double-stranded DNA using NAD as a coenzyme and as the energy source for the reaction. It is essential for DNA replication and repair of damaged DNA. This is DNA ligase from Exiguobacterium sibiricum (strain DSM 17290 / CCUG 55495 / CIP 109462 / JCM 13490 / 255-15).